A 374-amino-acid polypeptide reads, in one-letter code: 5-hydroxytryptamine receptor 1D (374 aa).

3 N-linked (GlcNAc...) asparagine glycosylation sites follow: Asn5, Asn17, and Asn21. The next 3 membrane-spanning stretches (helical) occupy residues 36–61 (ISLV…TTIL), 73–94 (LIGS…ISIA), and 107–131 (LCDI…VIAL). A disulfide bridge links Cys108 with Cys185. Positions 115 and 119 each coordinate serotonin. The DRY motif; important for ligand-induced conformation changes signature appears at 132–134 (DRY). A run of 4 helical transmembrane segments spans residues 152-173 (AAAM…PLFW), 192-215 (ISYT…ILYG), 298-323 (KTLG…VLPI), and 333-356 (ALFD…YTVF). Ser318 is a binding site for serotonin. Residues 349–353 (NPVIY) carry the NPxxY motif; important for ligand-induced conformation changes and signaling motif.

Belongs to the G-protein coupled receptor 1 family. Homodimer. Heterodimer with HTR1B. As to expression, detected in dorsal raphe.

The protein resides in the cell membrane. Functionally, G-protein coupled receptor for 5-hydroxytryptamine (serotonin). Also functions as a receptor for ergot alkaloid derivatives, various anxiolytic and antidepressant drugs and other psychoactive substances. Ligand binding causes a conformation change that triggers signaling via guanine nucleotide-binding proteins (G proteins) and modulates the activity of downstream effectors, such as adenylate cyclase. HTR1D is coupled to G(i)/G(o) G alpha proteins and mediates inhibitory neurotransmission by inhibiting adenylate cyclase activity. Regulates the release of 5-hydroxytryptamine in the brain, and thereby affects neural activity. May also play a role in regulating the release of other neurotransmitters. May play a role in vasoconstriction. The chain is 5-hydroxytryptamine receptor 1D (Htr1d) from Rattus norvegicus (Rat).